A 594-amino-acid polypeptide reads, in one-letter code: UvrABC system protein C (594 aa).

In terms of domain architecture, GIY-YIG spans 13-99 (HSSGVYQYFD…IKQLKPKYNI (87 aa)). The region spanning 205-240 (DKLIKELELKMERLSNNLRFEEALIYRDRIAKIQKI) is the UVR domain.

It belongs to the UvrC family. Interacts with UvrB in an incision complex.

Its subcellular location is the cytoplasm. The UvrABC repair system catalyzes the recognition and processing of DNA lesions. UvrC both incises the 5' and 3' sides of the lesion. The N-terminal half is responsible for the 3' incision and the C-terminal half is responsible for the 5' incision. This Helicobacter pylori (strain Shi470) protein is UvrABC system protein C.